Here is a 406-residue protein sequence, read N- to C-terminus: Imidazolonepropionase (406 aa).

Fe(3+) contacts are provided by H65 and H67. Positions 65 and 67 each coordinate Zn(2+). Residues R74, Y137, and H170 each coordinate 4-imidazolone-5-propanoate. Y137 lines the N-formimidoyl-L-glutamate pocket. Fe(3+) is bound at residue H235. A Zn(2+)-binding site is contributed by H235. Q238 is a binding site for 4-imidazolone-5-propanoate. Residue D310 coordinates Fe(3+). Residue D310 participates in Zn(2+) binding. Residues N312 and G314 each contribute to the N-formimidoyl-L-glutamate site. Residue T315 participates in 4-imidazolone-5-propanoate binding.

This sequence belongs to the metallo-dependent hydrolases superfamily. HutI family. Zn(2+) serves as cofactor. Requires Fe(3+) as cofactor.

It localises to the cytoplasm. It carries out the reaction 4-imidazolone-5-propanoate + H2O = N-formimidoyl-L-glutamate. The protein operates within amino-acid degradation; L-histidine degradation into L-glutamate; N-formimidoyl-L-glutamate from L-histidine: step 3/3. Its function is as follows. Catalyzes the hydrolytic cleavage of the carbon-nitrogen bond in imidazolone-5-propanoate to yield N-formimidoyl-L-glutamate. It is the third step in the universal histidine degradation pathway. The chain is Imidazolonepropionase from Vibrio vulnificus (strain CMCP6).